Reading from the N-terminus, the 271-residue chain is Phthiotriol/phenolphthiotriol dimycocerosates methyltransferase 1 (271 aa).

This sequence belongs to the methyltransferase superfamily. Phthiotriol/phenolphthiotriol dimycocerosates methyltransferase family.

In terms of biological role, catalyzes the methylation of the lipid moiety of the intermediate compounds phthiotriol and glycosylated phenolphthiotriol dimycoserosates to form phthiocerol dimycocerosates (DIM A) and glycosylated phenolphthiocerol dimycocerosates (PGL). In Mycobacterium ulcerans (strain Agy99), this protein is Phthiotriol/phenolphthiotriol dimycocerosates methyltransferase 1.